Consider the following 596-residue polypeptide: V-type ATP synthase alpha chain (596 aa).

Residue 233 to 240 participates in ATP binding; it reads GPFGAGKT.

This sequence belongs to the ATPase alpha/beta chains family.

It catalyses the reaction ATP + H2O + 4 H(+)(in) = ADP + phosphate + 5 H(+)(out). Its function is as follows. Produces ATP from ADP in the presence of a proton gradient across the membrane. The V-type alpha chain is a catalytic subunit. The protein is V-type ATP synthase alpha chain of Streptococcus gordonii (strain Challis / ATCC 35105 / BCRC 15272 / CH1 / DL1 / V288).